The chain runs to 426 residues: Serine--tRNA ligase (426 aa).

Residue threonine 233–glutamate 235 coordinates L-serine. Residue arginine 264–glutamate 266 participates in ATP binding. Glutamate 287 serves as a coordination point for L-serine. Glutamate 351–serine 354 contributes to the ATP binding site. An L-serine-binding site is contributed by serine 387.

It belongs to the class-II aminoacyl-tRNA synthetase family. Type-1 seryl-tRNA synthetase subfamily. As to quaternary structure, homodimer. The tRNA molecule binds across the dimer.

It is found in the cytoplasm. The enzyme catalyses tRNA(Ser) + L-serine + ATP = L-seryl-tRNA(Ser) + AMP + diphosphate + H(+). The catalysed reaction is tRNA(Sec) + L-serine + ATP = L-seryl-tRNA(Sec) + AMP + diphosphate + H(+). It participates in aminoacyl-tRNA biosynthesis; selenocysteinyl-tRNA(Sec) biosynthesis; L-seryl-tRNA(Sec) from L-serine and tRNA(Sec): step 1/1. Functionally, catalyzes the attachment of serine to tRNA(Ser). Is also able to aminoacylate tRNA(Sec) with serine, to form the misacylated tRNA L-seryl-tRNA(Sec), which will be further converted into selenocysteinyl-tRNA(Sec). The chain is Serine--tRNA ligase from Clostridium botulinum (strain Loch Maree / Type A3).